Reading from the N-terminus, the 245-residue chain is Eukaryotic translation initiation factor 3 subunit K (245 aa).

The 182-residue stretch at 46 to 227 (YDCYANLALL…EAKGTVVREN (182 aa)) folds into the PCI domain.

It belongs to the eIF-3 subunit K family. In terms of assembly, component of the eukaryotic translation initiation factor 3 (eIF-3) complex.

Its subcellular location is the cytoplasm. Its function is as follows. Component of the eukaryotic translation initiation factor 3 (eIF-3) complex, which is involved in protein synthesis of a specialized repertoire of mRNAs and, together with other initiation factors, stimulates binding of mRNA and methionyl-tRNAi to the 40S ribosome. The eIF-3 complex specifically targets and initiates translation of a subset of mRNAs involved in cell proliferation. The chain is Eukaryotic translation initiation factor 3 subunit K from Botryotinia fuckeliana (strain B05.10) (Noble rot fungus).